A 162-amino-acid chain; its full sequence is MNLNELRDNEGSRYRKKRLGRGIGSGKGKTSGRGVKGQKAREGVSLNGFEGGQLPLYRRMPKRGFVNIFRKEYAPVNLGAISKAIESGKLDKAATVNEEALRKAGLVNGSKLAGVRLLAHGELSHGVTIEVAGASAAALAAVEKAGGTVKVLETKKEAQADA.

Basic and acidic residues predominate over residues 1 to 13 (MNLNELRDNEGSR). Residues 1-39 (MNLNELRDNEGSRYRKKRLGRGIGSGKGKTSGRGVKGQK) are disordered. Residues 21–35 (RGIGSGKGKTSGRGV) show a composition bias toward gly residues.

It belongs to the universal ribosomal protein uL15 family. In terms of assembly, part of the 50S ribosomal subunit.

Binds to the 23S rRNA. The sequence is that of Large ribosomal subunit protein uL15 from Gluconobacter oxydans (strain 621H) (Gluconobacter suboxydans).